The sequence spans 168 residues: MRLTEKSEGEQQLKPNNSNAPNEDQEEEIQQSEQHTPARQRTQRADTQPSRCRLPSRRTPTTSSDRTINLLEVLPWPTEWIFNPYRLPALFELYPEFLLVFKEAFHDISHCLKAQMEKIGLPIILHLFALSTLYFYKFFLPTILSLSFFILLVLLLLLFIIVFILIFF.

Basic and acidic residues predominate over residues M1–Q11. Residues M1 to S63 form a disordered region. Polar residues-rich tracts occupy residues L13–N22 and H35–Q48. Residues P49 to S63 are compositionally biased toward low complexity. Transmembrane regions (helical) follow at residues I119–F139 and F148–F168.

The protein resides in the membrane. The sequence is that of Transmembrane protein 31 (TMEM31) from Homo sapiens (Human).